The chain runs to 798 residues: Integrin beta-5 (798 aa).

The signal sequence occupies residues Met-1–Ala-23. At Gly-24–Asn-719 the chain is on the extracellular side. Residues Ile-27–Glu-76 enclose the PSI domain. 19 disulfide bridges follow: Cys-28–Cys-46, Cys-36–Cys-463, Cys-39–Cys-64, Cys-49–Cys-75, Cys-202–Cys-211, Cys-259–Cys-300, Cys-401–Cys-413, Cys-433–Cys-461, Cys-465–Cys-484, Cys-476–Cys-487, Cys-489–Cys-498, Cys-500–Cys-530, Cys-513–Cys-528, Cys-522–Cys-533, Cys-535–Cys-548, Cys-550–Cys-571, Cys-555–Cys-569, Cys-563–Cys-574, and Cys-576–Cys-585. Positions Tyr-136–Ile-378 constitute a VWFA domain. Residues Ser-147 and Ser-149 each contribute to the Mg(2+) site. Residues Ser-149, Asp-152, Asp-153, and Asp-184 each coordinate Ca(2+). Residues Asn-242, Asp-244, Pro-246, and Glu-247 each coordinate Ca(2+). Glu-247 contributes to the Mg(2+) binding site. Asn-347 carries an N-linked (GlcNAc...) asparagine glycan. Ca(2+) is bound at residue Gly-362. N-linked (GlcNAc...) asparagine glycosylation is found at Asn-460 and Asn-479. 4 consecutive I-EGF domains span residues Cys-465–Glu-499, Cys-500–Glu-549, Cys-550–Asn-586, and Cys-587–Glu-626. Asn-505 carries an N-linked (GlcNAc...) asparagine glycan. The N-linked (GlcNAc...) asparagine glycan is linked to Asn-586. 9 disulfides stabilise this stretch: Cys-587/Cys-610, Cys-594/Cys-608, Cys-602/Cys-613, Cys-615/Cys-625, Cys-628/Cys-631, Cys-635/Cys-682, Cys-641/Cys-661, Cys-644/Cys-657, and Cys-690/Cys-714. 2 N-linked (GlcNAc...) asparagine glycosylation sites follow: Asn-654 and Asn-705. Residues Ala-720 to Trp-742 form a helical membrane-spanning segment. The Cytoplasmic segment spans residues Lys-743 to Val-798. Phosphoserine is present on Ser-770.

It belongs to the integrin beta chain family. Heterodimer of an alpha and a beta subunit. Beta-5 (ITGB5) associates with alpha-V (ITGAV). Interacts with MYO10. Interacts with DAB2. Integrin ITGAV:ITGB5 interacts with FBLN5 (via N-terminus). ITGAV:ITGB5 interacts with CCN3. Interacts with tensin TNS3; TNS3 also interacts with PEAK1, thus acting as an adapter molecule to bridge the association of PEAK1 with ITGB5.

The protein localises to the cell membrane. Functionally, integrin alpha-V/beta-5 (ITGAV:ITGB5) is a receptor for fibronectin. It recognizes the sequence R-G-D in its ligand. This is Integrin beta-5 (Itgb5) from Mus musculus (Mouse).